The following is a 164-amino-acid chain: Rhomboid-related protein 1 (164 aa).

A run of 4 helical transmembrane segments spans residues G10–L30, I32–M52, V56–M76, and P120–L140. The active-site Nucleophile is S60. H125 is an active-site residue.

Belongs to the peptidase S54 family.

Its subcellular location is the membrane. It catalyses the reaction Cleaves type-1 transmembrane domains using a catalytic dyad composed of serine and histidine that are contributed by different transmembrane domains.. May be involved in regulated intramembrane proteolysis and the subsequent release of functional polypeptides from their membrane anchors. The polypeptide is Rhomboid-related protein 1 (Rhbdl1) (Rattus norvegicus (Rat)).